The primary structure comprises 121 residues: MKEGTGMVVRSSEITPERISNMRGGKGEVEMAHLLSKEAMHNKARLFARMKLPPGSSVGLHKHEGEFEIYYILLGEGVFHDNGKDVPIKAGDVCFTDSGESHSIENTGNTDLEFLAVIILL.

One can recognise a Cupin type-2 domain in the interval 49-117; that stretch reads RMKLPPGSSV…GNTDLEFLAV (69 aa). The Mn(2+) site is built by His61, His63, and Glu68. Tyr70 provides a ligand contact to oxalate. Residue His102 coordinates Mn(2+).

In terms of assembly, homodimer.

Functionally, binds oxalate. This Thermotoga maritima (strain ATCC 43589 / DSM 3109 / JCM 10099 / NBRC 100826 / MSB8) protein is Oxalate-binding protein.